We begin with the raw amino-acid sequence, 286 residues long: Bifunctional protein FolD (286 aa).

Residues 167-169 and isoleucine 233 each bind NADP(+); that span reads GRS.

This sequence belongs to the tetrahydrofolate dehydrogenase/cyclohydrolase family. As to quaternary structure, homodimer.

The enzyme catalyses (6R)-5,10-methylene-5,6,7,8-tetrahydrofolate + NADP(+) = (6R)-5,10-methenyltetrahydrofolate + NADPH. The catalysed reaction is (6R)-5,10-methenyltetrahydrofolate + H2O = (6R)-10-formyltetrahydrofolate + H(+). The protein operates within one-carbon metabolism; tetrahydrofolate interconversion. In terms of biological role, catalyzes the oxidation of 5,10-methylenetetrahydrofolate to 5,10-methenyltetrahydrofolate and then the hydrolysis of 5,10-methenyltetrahydrofolate to 10-formyltetrahydrofolate. The protein is Bifunctional protein FolD of Limosilactobacillus reuteri (strain DSM 20016) (Lactobacillus reuteri).